The following is a 396-amino-acid chain: 1-deoxy-D-xylulose 5-phosphate reductoisomerase (396 aa).

NADPH contacts are provided by Thr10, Gly11, Ser12, Ile13, and Asn123. Lys124 provides a ligand contact to 1-deoxy-D-xylulose 5-phosphate. Glu125 lines the NADPH pocket. Asp149 serves as a coordination point for Mn(2+). 1-deoxy-D-xylulose 5-phosphate is bound by residues Ser150, Glu151, Ser185, and His208. Glu151 lines the Mn(2+) pocket. Residue Gly214 participates in NADPH binding. The 1-deoxy-D-xylulose 5-phosphate site is built by Ser221, Asn226, Lys227, and Glu230. Glu230 contributes to the Mn(2+) binding site.

It belongs to the DXR family. Requires Mg(2+) as cofactor. It depends on Mn(2+) as a cofactor.

It carries out the reaction 2-C-methyl-D-erythritol 4-phosphate + NADP(+) = 1-deoxy-D-xylulose 5-phosphate + NADPH + H(+). It participates in isoprenoid biosynthesis; isopentenyl diphosphate biosynthesis via DXP pathway; isopentenyl diphosphate from 1-deoxy-D-xylulose 5-phosphate: step 1/6. Functionally, catalyzes the NADPH-dependent rearrangement and reduction of 1-deoxy-D-xylulose-5-phosphate (DXP) to 2-C-methyl-D-erythritol 4-phosphate (MEP). The chain is 1-deoxy-D-xylulose 5-phosphate reductoisomerase from Shewanella sp. (strain MR-4).